We begin with the raw amino-acid sequence, 495 residues long: Transmembrane protein 161A (495 aa).

The signal sequence occupies residues 1-28 (MALMGVQLVVSLLAVSIMQRMAPHLSFA). At 29–99 (RWLLCNGSLL…VNVMDALVLR (71 aa)) the chain is on the extracellular side. Asn-34 carries N-linked (GlcNAc...) asparagine glycosylation. The helical transmembrane segment at 100–120 (FFVEYQWLIDFAVYATGIYLF) threads the bilayer. At 121 to 135 (TEGYYSVVDASKEVN) the chain is on the cytoplasmic side. Residues 136 to 156 (IASIWCVLTVLFCLRTLYLLM) traverse the membrane as a helical segment. Residues 157–167 (SHYFLSEEGGE) lie on the Extracellular side of the membrane. A helical membrane pass occupies residues 168 to 188 (RSVCLAFGFLSLLIAMLVLVV). Over 189 to 227 (REDYLEFGLEPGFTSLFDNFEVFARKQGYEWSVPFTKLS) the chain is Cytoplasmic. Residues 228 to 248 (VKLGLAVICAFIGALLAFPGL) form a helical membrane-spanning segment. At 249–265 (RLAQTHLDAVQMNADRP) the chain is on the extracellular side. The helical transmembrane segment at 266–286 (MIQILLHMSFLSPLVIIVMWI) threads the bilayer. Residues 287–305 (KPIARDFLGNAPMGKTSVT) lie on the Cytoplasmic side of the membrane. Residues 306-326 (LLSSSAFSSVRLWTIVVLCVL) traverse the membrane as a helical segment. The Extracellular segment spans residues 327–367 (RLLLTRYHLQAYLNLAQKWVEQMKKEAGRIAAIDIQRKVTR). The helical transmembrane segment at 368 to 388 (IFCYLTVVTLQYLIPILLVLF) threads the bilayer. Over 389–465 (STLALKSLGD…ALLTPIFFRG (77 aa)) the chain is Cytoplasmic. A helical membrane pass occupies residues 466–486 (IFAFLTWWVAACQLISSLFGI). Residues 487 to 495 (YFHQYLMHN) are Extracellular-facing.

This sequence belongs to the TMEM161 family.

It localises to the membrane. May play a role in protection against oxidative stress. The sequence is that of Transmembrane protein 161A (tmem161a) from Danio rerio (Zebrafish).